We begin with the raw amino-acid sequence, 875 residues long: Alanine--tRNA ligase (875 aa).

4 residues coordinate Zn(2+): His-564, His-568, Cys-666, and His-670.

Belongs to the class-II aminoacyl-tRNA synthetase family. Homotetramer. Requires Zn(2+) as cofactor.

It is found in the cytoplasm. The catalysed reaction is tRNA(Ala) + L-alanine + ATP = L-alanyl-tRNA(Ala) + AMP + diphosphate. Catalyzes the attachment of alanine to tRNA(Ala) in a two-step reaction: alanine is first activated by ATP to form Ala-AMP and then transferred to the acceptor end of tRNA(Ala). Also edits incorrectly charged Ser-tRNA(Ala) and Gly-tRNA(Ala) via its editing domain. The polypeptide is Alanine--tRNA ligase (Serratia proteamaculans (strain 568)).